The chain runs to 287 residues: Large ribosomal subunit protein uL5m (287 aa).

Residues 1–18 (MLGIRKNIRISVNFLQRR) constitute a mitochondrion transit peptide. A compositionally biased stretch (basic and acidic residues) spans 80 to 89 (DEHTQKDRLP). The tract at residues 80–109 (DEHTQKDRLPRWIGDNPYYKNRPPQKMRGN) is disordered.

The protein belongs to the universal ribosomal protein uL5 family. Component of the mitochondrial large ribosomal subunit (mt-LSU). Mature yeast 74S mitochondrial ribosomes consist of a small (37S) and a large (54S) subunit. The 37S small subunit contains a 15S ribosomal RNA (15S mt-rRNA) and at least 32 different proteins. The 54S large subunit contains a 21S rRNA (21S mt-rRNA) and at least 45 different proteins. Unlike bacterial L5, uL5m does not bind zinc.

Its subcellular location is the mitochondrion. Component of the mitochondrial ribosome (mitoribosome), a dedicated translation machinery responsible for the synthesis of mitochondrial genome-encoded proteins, including at least some of the essential transmembrane subunits of the mitochondrial respiratory chain. The mitoribosomes are attached to the mitochondrial inner membrane and translation products are cotranslationally integrated into the membrane. The polypeptide is Large ribosomal subunit protein uL5m (mrpl7) (Schizosaccharomyces pombe (strain 972 / ATCC 24843) (Fission yeast)).